Reading from the N-terminus, the 117-residue chain is Replication initiation control protein YabA (117 aa).

Zn(2+) contacts are provided by His-87, Cys-89, Cys-103, and Cys-106.

Belongs to the YabA family. In terms of assembly, homotetramer. Interacts with both DnaA and DnaN, acting as a bridge between these two proteins. Requires Zn(2+) as cofactor.

The protein localises to the cytoplasm. It is found in the nucleoid. Involved in control of chromosome replication initiation. Inhibits the cooperative binding of DnaA to the oriC region, thus negatively regulating initiation of chromosome replication. Inhibits the ability of DnaA-ATP to form a helix on DNA; does not disassemble preformed DnaA-DNA helices. Decreases the residence time of DnaA on the chromosome at its binding sites (oriC, replication forks and promoter-binding sites). Tethers DnaA to the replication machinery via the DNA polymerase beta sliding clamp subunit (dnaN). Associates with oriC and other DnaA targets on the chromosome in a DnaA-dependent manner. The sequence is that of Replication initiation control protein YabA from Latilactobacillus sakei subsp. sakei (strain 23K) (Lactobacillus sakei subsp. sakei).